The chain runs to 249 residues: Protein YIP5 (249 aa).

Transmembrane regions (helical) follow at residues 87 to 107, 131 to 151, 164 to 184, 188 to 208, and 228 to 248; these read LYGPFWITTTVIQALFFSNSI, ASIIYGYTTIIAVLLWGILVW, LYGYANIVWLPVSLATPPFGL, LASHIVKYVLTGIGLLISIVF, and LLFGIIVFHCLLALSLQLIFF.

This sequence belongs to the YIP1 family. Interacts with the YIP1 family members yip1 and yip4, and several Rab GTPases. The C-terminal cysteines in the Rab GTPase ypt2 are essential for the interaction. Interacts with snx3.

It localises to the membrane. In terms of biological role, possible role in vesicle-mediated transport. May be involved in proper membrane localization of Rab GTPases. The protein is Protein YIP5 of Schizosaccharomyces pombe (strain 972 / ATCC 24843) (Fission yeast).